The primary structure comprises 266 residues: Energy-coupling factor transporter transmembrane protein EcfT (266 aa).

Helical transmembrane passes span 26 to 46 (VIAT…RSVT), 47 to 67 (LAGL…HYIL), 69 to 89 (GIKP…LSTP), 116 to 136 (LIWL…IALT), 151 to 171 (LPVH…PTLI), 192 to 212 (SLVA…LSAF), and 246 to 266 (YAVT…KKAL).

Belongs to the energy-coupling factor EcfT family. In terms of assembly, forms a stable energy-coupling factor (ECF) transporter complex composed of 2 membrane-embedded substrate-binding proteins (S component), 2 ATP-binding proteins (A component) and 2 transmembrane proteins (T component). May be able to interact with more than 1 S component at a time.

It localises to the cell membrane. Functionally, transmembrane (T) component of an energy-coupling factor (ECF) ABC-transporter complex. Unlike classic ABC transporters this ECF transporter provides the energy necessary to transport a number of different substrates. The sequence is that of Energy-coupling factor transporter transmembrane protein EcfT from Heliobacterium modesticaldum (strain ATCC 51547 / Ice1).